The primary structure comprises 334 residues: Glyceraldehyde-3-phosphate dehydrogenase (334 aa).

NAD(+)-binding positions include 12–13, aspartate 37, arginine 81, and serine 123; that span reads RI. D-glyceraldehyde 3-phosphate is bound by residues 153-155 and threonine 184; that span reads SCT. Residue cysteine 154 is the Nucleophile of the active site. NAD(+) is bound at residue asparagine 185. Residues arginine 199, 212 to 213, and arginine 235 contribute to the D-glyceraldehyde 3-phosphate site; that span reads TG. NAD(+) is bound at residue asparagine 314.

It belongs to the glyceraldehyde-3-phosphate dehydrogenase family. Homotetramer.

Its subcellular location is the cytoplasm. It carries out the reaction D-glyceraldehyde 3-phosphate + phosphate + NAD(+) = (2R)-3-phospho-glyceroyl phosphate + NADH + H(+). The protein operates within carbohydrate degradation; glycolysis; pyruvate from D-glyceraldehyde 3-phosphate: step 1/5. Functionally, catalyzes the oxidative phosphorylation of glyceraldehyde 3-phosphate (G3P) to 1,3-bisphosphoglycerate (BPG) using the cofactor NAD. The first reaction step involves the formation of a hemiacetal intermediate between G3P and a cysteine residue, and this hemiacetal intermediate is then oxidized to a thioester, with concomitant reduction of NAD to NADH. The reduced NADH is then exchanged with the second NAD, and the thioester is attacked by a nucleophilic inorganic phosphate to produce BPG. The sequence is that of Glyceraldehyde-3-phosphate dehydrogenase (gap) from Pseudomonas aeruginosa (strain ATCC 15692 / DSM 22644 / CIP 104116 / JCM 14847 / LMG 12228 / 1C / PRS 101 / PAO1).